The primary structure comprises 448 residues: Tubulin beta-2 chain (448 aa).

Positions 11, 69, 138, 142, 143, 144, 204, and 226 each coordinate GTP. Position 69 (Glu69) interacts with Mg(2+). The tract at residues 429-448 (TADEDGYEYEDEEEVGEEDA) is disordered.

Belongs to the tubulin family. In terms of assembly, dimer of alpha and beta chains. A typical microtubule is a hollow water-filled tube with an outer diameter of 25 nm and an inner diameter of 15 nM. Alpha-beta heterodimers associate head-to-tail to form protofilaments running lengthwise along the microtubule wall with the beta-tubulin subunit facing the microtubule plus end conferring a structural polarity. Microtubules usually have 13 protofilaments but different protofilament numbers can be found in some organisms and specialized cells. The cofactor is Mg(2+).

It localises to the cytoplasm. The protein resides in the cytoskeleton. Its function is as follows. Tubulin is the major constituent of microtubules, a cylinder consisting of laterally associated linear protofilaments composed of alpha- and beta-tubulin heterodimers. Microtubules grow by the addition of GTP-tubulin dimers to the microtubule end, where a stabilizing cap forms. Below the cap, tubulin dimers are in GDP-bound state, owing to GTPase activity of alpha-tubulin. The sequence is that of Tubulin beta-2 chain (TUBB2) from Lupinus albus (White lupine).